The sequence spans 184 residues: MGIEEKIPGGFLLTTVEKAVGWVRKSSLWPATFGLACCAIEMMATGAGRYDLARFGMEVFRASPRQADLMIVAGRVSQKMAPVLRQIYDQMPEPKWVLAMGVCASSGGMFNNYAIVQGVDHVVPVDMYLPGCPPRPEMLMHAILELHEKIKSTKLGVHAVREAHEREEAAKHALPTHSMKGLLR.

C37, C38, C103, and C132 together coordinate [4Fe-4S] cluster. The disordered stretch occupies residues H164–R184.

Belongs to the complex I 20 kDa subunit family. In terms of assembly, NDH-1 is composed of 14 different subunits. Subunits NuoB, C, D, E, F, and G constitute the peripheral sector of the complex. [4Fe-4S] cluster is required as a cofactor.

It is found in the cell membrane. It carries out the reaction a quinone + NADH + 5 H(+)(in) = a quinol + NAD(+) + 4 H(+)(out). In terms of biological role, NDH-1 shuttles electrons from NADH, via FMN and iron-sulfur (Fe-S) centers, to quinones in the respiratory chain. The immediate electron acceptor for the enzyme in this species is believed to be a menaquinone. Couples the redox reaction to proton translocation (for every two electrons transferred, four hydrogen ions are translocated across the cytoplasmic membrane), and thus conserves the redox energy in a proton gradient. The chain is NADH-quinone oxidoreductase subunit B from Acidothermus cellulolyticus (strain ATCC 43068 / DSM 8971 / 11B).